A 304-amino-acid polypeptide reads, in one-letter code: Probable 5-dehydro-4-deoxyglucarate dehydratase (304 aa).

This sequence belongs to the DapA family.

It catalyses the reaction 5-dehydro-4-deoxy-D-glucarate + H(+) = 2,5-dioxopentanoate + CO2 + H2O. The protein operates within carbohydrate acid metabolism; D-glucarate degradation; 2,5-dioxopentanoate from D-glucarate: step 2/2. The sequence is that of Probable 5-dehydro-4-deoxyglucarate dehydratase from Arthrobacter sp. (strain FB24).